A 188-amino-acid chain; its full sequence is Probable RNA-binding protein 18 (188 aa).

The RRM domain occupies 23–104; it reads HRLWIGNIDP…KKLVVRWAHA (82 aa). The segment at 151–188 is disordered; it reads EENPDDYSGPSAYTYNKPPDKREKRSQPYHKHFRKHRR. The segment covering 177 to 188 has biased composition (basic residues); the sequence is QPYHKHFRKHRR.

This Danio rerio (Zebrafish) protein is Probable RNA-binding protein 18 (rbm18).